The primary structure comprises 196 residues: Carnitine operon protein CaiE (196 aa).

The disordered stretch occupies residues T173–R196. The span at Q187–R196 shows a compositional bias: polar residues.

The protein belongs to the transferase hexapeptide repeat family.

It functions in the pathway amine and polyamine metabolism; carnitine metabolism. In terms of biological role, overproduction of CaiE stimulates the activity of CaiB and CaiD. The polypeptide is Carnitine operon protein CaiE (Escherichia coli O157:H7).